The primary structure comprises 502 residues: Calnexin homolog (502 aa).

Residues 1-19 (MKFSAYLWWLFLNLALVKG) form the signal peptide. The Lumenal segment spans residues 20–481 (TSLLSNVTLA…IDRILEQPLK (462 aa)). N-linked (GlcNAc...) asparagine glycans are attached at residues N25 and N104. A disulfide bridge connects residues C125 and C161. An alpha-D-glucoside is bound by residues K131 and D159. A p domain (Extended arm) region spans residues 248–381 (IPDVSVAKPH…PEIENPLYYE (134 aa)). 5 repeat units span residues 250 to 261 (DVSVAKPHDWDD), 267 to 278 (DPEAVKLSDRDE), 286 to 297 (HPDGTEPPEWNS), 305 to 316 (DPNAQKPSWWKE), and 320 to 330 (GEWIPPMIKNP). 2 4 X approximate repeats regions span residues 250-316 (DVSV…WWKE) and 320-377 (GEWI…IENP). Residue N296 is glycosylated (N-linked (GlcNAc...) asparagine). A disulfide bridge connects residues C332 and C338. Tandem repeats lie at residues 339–349 (GQQIPGLINNA), 353–363 (GPGELNEIINP), and 367–377 (GEWHPPEIENP). E398 contacts an alpha-D-glucoside. Residues N416 and N425 are each glycosylated (N-linked (GlcNAc...) asparagine). Residues 482-502 (FVLTAAVVLLTTSVLCCVVFT) form a helical membrane-spanning segment.

It belongs to the calreticulin family. In terms of assembly, interacts with MPD1.

Its subcellular location is the endoplasmic reticulum membrane. Functionally, interacts with newly synthesized monoglucosylated glycoproteins in the endoplasmic reticulum. It may act in assisting protein assembly and/or in the retention within the ER of unassembled protein subunits. It seems to play a major role in the quality control apparatus of the ER by the retention of incorrectly folded proteins. In Saccharomyces cerevisiae (strain ATCC 204508 / S288c) (Baker's yeast), this protein is Calnexin homolog (CNE1).